We begin with the raw amino-acid sequence, 445 residues long: 23S rRNA (uracil(1939)-C(5))-methyltransferase RlmD (445 aa).

Residues 6 to 64 enclose the TRAM domain; that stretch reads RRLPREPFEIAITGLSHEGRGIAHHDERTLFVHGALPGERVRAVYTKRRRSVAEARVVE. [4Fe-4S] cluster contacts are provided by Cys77, Cys83, Cys86, and Cys165. Gln274, Phe303, Asn308, Glu324, Asp351, and Asp372 together coordinate S-adenosyl-L-methionine. Cys398 functions as the Nucleophile in the catalytic mechanism.

The protein belongs to the class I-like SAM-binding methyltransferase superfamily. RNA M5U methyltransferase family. RlmD subfamily.

The catalysed reaction is uridine(1939) in 23S rRNA + S-adenosyl-L-methionine = 5-methyluridine(1939) in 23S rRNA + S-adenosyl-L-homocysteine + H(+). In terms of biological role, catalyzes the formation of 5-methyl-uridine at position 1939 (m5U1939) in 23S rRNA. The chain is 23S rRNA (uracil(1939)-C(5))-methyltransferase RlmD from Alkalilimnicola ehrlichii (strain ATCC BAA-1101 / DSM 17681 / MLHE-1).